The primary structure comprises 303 residues: Probable 5-dehydro-4-deoxyglucarate dehydratase (303 aa).

Belongs to the DapA family.

It carries out the reaction 5-dehydro-4-deoxy-D-glucarate + H(+) = 2,5-dioxopentanoate + CO2 + H2O. It functions in the pathway carbohydrate acid metabolism; D-glucarate degradation; 2,5-dioxopentanoate from D-glucarate: step 2/2. This Pseudomonas syringae pv. tomato (strain ATCC BAA-871 / DC3000) protein is Probable 5-dehydro-4-deoxyglucarate dehydratase.